A 269-amino-acid polypeptide reads, in one-letter code: Energy-coupling factor transporter transmembrane protein EcfT (269 aa).

6 helical membrane passes run 45-65 (RFFL…RVSL), 75-95 (VLWL…GEAI), 110-130 (MAAL…LLTL), 153-173 (FPAH…PTLL), 202-222 (FVPV…DLAL), and 244-264 (CLED…LLFL).

The protein belongs to the energy-coupling factor EcfT family. In terms of assembly, forms a stable energy-coupling factor (ECF) transporter complex composed of 2 membrane-embedded substrate-binding proteins (S component), 2 ATP-binding proteins (A component) and 2 transmembrane proteins (T component). May be able to interact with more than 1 S component at a time.

Its subcellular location is the cell membrane. Its function is as follows. Transmembrane (T) component of an energy-coupling factor (ECF) ABC-transporter complex. Unlike classic ABC transporters this ECF transporter provides the energy necessary to transport a number of different substrates. In Thermanaerovibrio acidaminovorans (strain ATCC 49978 / DSM 6589 / Su883) (Selenomonas acidaminovorans), this protein is Energy-coupling factor transporter transmembrane protein EcfT.